Reading from the N-terminus, the 364-residue chain is Mannose-1-phosphate guanyltransferase (364 aa).

Belongs to the transferase hexapeptide repeat family.

It localises to the cytoplasm. It carries out the reaction alpha-D-mannose 1-phosphate + GTP + H(+) = GDP-alpha-D-mannose + diphosphate. It participates in nucleotide-sugar biosynthesis; GDP-alpha-D-mannose biosynthesis; GDP-alpha-D-mannose from alpha-D-mannose 1-phosphate (GTP route): step 1/1. Its function is as follows. Involved in cell wall synthesis where it is required for glycosylation. Involved in cell cycle progression through cell-size checkpoint. The protein is Mannose-1-phosphate guanyltransferase (mpg1) of Aspergillus oryzae (strain ATCC 42149 / RIB 40) (Yellow koji mold).